A 2248-amino-acid polypeptide reads, in one-letter code: MKDKRKKKDRTWAEAARLALEKHPNSPMTAKQILEVIQKEGLKETSGTSPLACLNAMLHTNTRIGDGTFFKIPGKSGLYALKKEESSCPADGTLDLVCESELDGTDMAEANAHGEENGVCSKQVTDEASSTRDSSLTNTAVQSKLVSSFQQHTKKALKQALRQQQKRRNGVSMMVNKTVPRVVLTPLKVSDEQSDSPSGSESKNGEADSSDKEMKHGQKSPTGKQTSQHLKRLKKSGLGHLKWTKAEDIDIETPGSILVNTNLRALINKHTFASLPQHFQQYLLLLLPEVDRQMGSDGILRLSTSALNNEFFAYAAQGWKQRLAEGEFTPEMQLRIRQEIEKEKKTEPWKEKFFERFYGEKLGMSREESVKLTTGPNNAGAQSSSSCGTSGLPVSAQTALAEQQPKSMKSPASPEPGFCATLCPMVEIPPKDIMAELESEDILIPEESVIQEEIAEEVETSICECQDENHKTIPEFSEEAESLTNSHEEPQIAPPEDNLESCVMMNDVLETLPHIEVKIEGKSESPQEEMTVVIDQLEVCDSLIPSTSSMTHVSDTEHKESETAVETSTPKIKTGSSSLEGQFPNEGIAIDMELQSDPEEQLSENACISETSFSSESPEGACTSLPSPGGETQSTSEESCTPASLETTFCSEVSSTENTDKYNQRNSTDENFHASLMSEISPISTSPEISEASLMSNLPLTSEASPVSNLPLTSETSPMSDLPLTSETSSVSSMLLTSETTFVSSLPLPSETSPISNSSINERMAHQQRKSPSVSEEPLSPQKDESSATAKPLGENLTSQQKNLSNTPEPIIMSSSSIAPEAFPSEDLHNKTLSQQTCKSHVDTEKPYPASIPELASTEMIKVKNHSVLQRTEKKVLPSPLELSVFSEGTDNKGNELPSAKLQDKQYISSVDKAPFSEGSRNKTHKQGSTQSRLETSHTSKSSEPSKSPDGIRNESRDSEISKRKTAEQHSFGICKEKRARIEDDQSTRNISSSSPPEKEQPPREEPRVPPLKIQLSKIGPPFIIKSQPVSKPESRASTSTSVSGGRNTGARTLADIKARAQQARAQREAAAAAAVAAAASIVSGAMGSPGEGGKTRTLAHIKEQTKAKLFAKHQARAHLFQTSKETRLPPPLSSKEGPPNLEVSSTPETKMEGSTGVIIVNPNCRSPSNKSAHLRETTTVLQQSLNPSKLPETATDLSVHSSDENIPVSHLSEKIVSSTSSENSSVPMLFNKNSVPVSVCSTAISGAIKEHPFVSSVDKSSVLMSVDSANTTISACNISMLKTIQGTDTPCIAIIPKCIESTPISATTEGSSISSSMDDKQLLISSSSASNLVSTQYTSVPTPSIGNNLPNLSTSSVLIPPMGINNRFPSEKIAIPGSEEQATVSMGTTVRAALSCSDSVAVTDSLVAHPTVAMFTGNMLTINSYDSPPKLSAESLDKNSGPRNRADNSGKPQQPPGGFAPAAINRSIPCKVIVDHSTTLTSSLSLTVSVESSEASLDLQGRPVRTEASVQPVACPQVSVISRPEPVANEGIDHSSTFIAASAAKQDSKTLPATCTSLRELPLVPDKLNEPTAPSHNFAEQARGPAPFKSEADTTCSNQYNPSNRICWNDDGMRSTGQPLVTHSGSSKQKEYLEQSCPKAIKTEHANYLNVSELHPRNLVTNVALPVKSELHEADKGFRMDTEDFPGPELPPPAAEGASSVQQTQNMKASTSSPMEEAISLATDALKRVPGAGSSGCRLSSVEANNPLVTQLLQGNLPLEKVLPQPRLGAKLEINRLPLPLQTTSVGKTAPERNVEIPPSSPNPDGKGYLAGTLAPLQMRKRENHPKKRVARTVGEHTQVKCEPGKLLVEPDVKGVPCVISSGISQLGHSQPFKQEWLNKHSMQNRIVHSPEVKQQKRLLPSCSFQQNLFHVDKNGGFHTDAGTSHRQQFYQMPVAARGPIPTAALLQASSKTPVGCNAFAFNRHLEQKGLGEVSLSSAPHQLRLANMLSPNMPMKEGDEVGGTAHTMPNKALVHPPPPPPPPPPPPLALPPPPPPPPPLPPPLPNAEVPSDQKQPPVTMETTKRLSWPQSTGICSNIKSEPLSFEEGLSSSCELGMKQVSYDQNEMKEQLKAFALKSADFSSYLLSEPQKPFTQLAAQKMQVQQQQQLCGNYPTIHFGSTSFKRAASAIEKSIGILGSGSNPATGLSGQNAQMPVQNFADSSNADELELKCSCRLKAMIVCKGCGAFCHDDCIGPSKLCVACLVVR.

An HTH HARE-type domain is found at 10 to 84 (RTWAEAARLA…KSGLYALKKE (75 aa)). Positions 156-232 (ALKQALRQQQ…GKQTSQHLKR (77 aa)) are disordered. Over residues 203–216 (KNGEADSSDKEMKH) the composition is skewed to basic and acidic residues. Positions 219–228 (KSPTGKQTSQ) are enriched in polar residues. The 110-residue stretch at 254-363 (PGSILVNTNL…FERFYGEKLG (110 aa)) folds into the DEUBAD domain. Disordered stretches follow at residues 368 to 414 (ESVK…PASP), 547 to 583 (TSSM…EGQF), 607 to 643 (CISE…CTPA), 703 to 726 (EASP…PLTS), 762 to 853 (ERMA…ASIP), 869 to 1052 (LQRT…TGAR), 1123 to 1152 (TSKE…ETKM), 1183 to 1203 (QQSL…VHSS), 1431 to 1462 (KLSA…GFAP), 1573 to 1596 (TAPS…ADTT), and 1990 to 2068 (LSPN…KRLS). 5 stretches are compositionally biased toward polar residues: residues 371–389 (KLTT…SCGT), 395–407 (SAQT…QPKS), 564–580 (AVET…SSLE), 607–617 (CISETSFSSES), and 624–643 (SLPS…CTPA). Over residues 796 to 818 (NLTSQQKNLSNTPEPIIMSSSSI) the composition is skewed to polar residues. Residues 937 to 949 (SHTSKSSEPSKSP) show a composition bias toward low complexity. 3 stretches are compositionally biased toward basic and acidic residues: residues 950 to 968 (DGIR…KTAE), 975 to 987 (CKEK…DDQS), and 997 to 1008 (PEKEQPPREEPR). A compositionally biased stretch (polar residues) spans 1036 to 1046 (RASTSTSVSGG). The span at 2016-2046 (HPPPPPPPPPPPPLALPPPPPPPPPLPPPLP) shows a compositional bias: pro residues. The segment at 2210–2247 (ELKCSCRLKAMIVCKGCGAFCHDDCIGPSKLCVACLVV) adopts a PHD-type; atypical zinc-finger fold.

It belongs to the Asx family. In terms of assembly, core component of the polycomb repressive deubiquitinase (PR-DUB) complex, at least composed of BAP1, one of ASXL1, ASXL2 or (probably) ASXL3, and one of MBD5 or MBD6. Distinct combinations of ASXL and MBD proteins may preferentially bind specific histone modification marks. The PR-DUB core associates with a number of accessory proteins, including FOXK1, FOXK2, KDM1B, HCFC1 and OGT; KDM1B specifically associates with ASXL2 PR-DUB complexes. Interacts (via PHD domain) with MBD5 and MBD6 (via MBD domain); the interaction is probably direct and mediates association of MBD proteins with the PR-DUB core. In terms of tissue distribution, expressed in pancreatic islets, testis, neuroblastoma, head and neck tumor.

It is found in the nucleus. Its function is as follows. Putative Polycomb group (PcG) protein. PcG proteins act by forming multiprotein complexes, which are required to maintain the transcriptionally repressive state of homeotic genes throughout development. PcG proteins are not required to initiate repression, but to maintain it during later stages of development. They probably act via methylation of histones, rendering chromatin heritably changed in its expressibility. Non-catalytic component of the PR-DUB complex, a complex that specifically mediates deubiquitination of histone H2A monoubiquitinated at 'Lys-119' (H2AK119ub1). The PR-DUB complex is an epigenetic regulator of gene expression and acts as a transcriptional coactivator, affecting genes involved in development, cell communication, signaling, cell proliferation and cell viability. ASXL1, ASXL2 and ASXL3 function redundantly in the PR-DUB complex and are essential for chromatin recruitment and transcriptional activation of associated genes. The chain is Putative Polycomb group protein ASXL3 (ASXL3) from Homo sapiens (Human).